The following is a 237-amino-acid chain: Cysteine-rich venom protein DIS3 (237 aa).

The first 18 residues, 1–18 (MFVFILLSLAAVLQQSFG), serve as a signal peptide directing secretion. In terms of domain architecture, SCP spans 37–165 (VDKHNAFRRS…SYDYFYVCQY (129 aa)). Cystine bridges form between C74–C152, C91–C166, C147–C163, C185–C192, C188–C197, C201–C234, and C219–C232. The region spanning 201 to 234 (CSREDVFTNCKSLVAKSNCQDDYIRKNCLATCFC) is the ShKT domain.

The protein belongs to the CRISP family. Expressed by the venom gland.

It localises to the secreted. Weakly blocks contraction of smooth muscle elicited by high potassium-induced depolarization, but does not block caffeine-stimulated contraction. May target voltage-gated calcium channels on smooth muscle. The protein is Cysteine-rich venom protein DIS3 of Dispholidus typus (Boomslang).